A 79-amino-acid chain; its full sequence is Protein GOLVEN 2 (79 aa).

Positions 1-26 (MAIRVSHKSFLVALLLILFISSPTQA) are cleaved as a signal peptide. Positions 27 to 65 (RSLREVVRNRTLLVVEKSQESRKIRHEGGGSDVDGLMDM) are excised as a propeptide. The interval 49–79 (KIRHEGGGSDVDGLMDMDYNSANKKRPIHNR) is disordered. Y67 carries the sulfotyrosine modification. At P75 the chain carries Hydroxyproline.

The protein belongs to the RGF family. In terms of assembly, binds to LRR receptor-like serine/threonine-protein kinases to trigger their dimerization with SERK proteins and subsequent signaling. As to expression, expressed in siliques, stems, hypocotyls, shoot apex, leaves, flowers and cotyledons, and, to a lower extent, in roots.

It is found in the secreted. It localises to the endoplasmic reticulum. Its function is as follows. Signaling peptide (root growth factor) that regulates the pattern of root growth and lateral root development by modulating the length and the number of cortical cells in the root apical meristem (RAM), and the anticlinal asymmetric cell divisions in lateral root initiation cells. Also involved in the regulation of hypocotyl bending and root gravitropism, probably by influencing the formation of auxin gradients. Maintains the postembryonic root stem cell niche. This chain is Protein GOLVEN 2, found in Arabidopsis thaliana (Mouse-ear cress).